Here is a 1146-residue protein sequence, read N- to C-terminus: Myosin heavy chain kinase A (1146 aa).

The disordered stretch occupies residues 1 to 25 (MFNIKKRKESITGIPPINVNSPQSV). Residues 100-120 (EQMEDQLEKTMKVVRNHTDSL) adopt a coiled-coil conformation. Positions 158–191 (IQEKKSTSSPLVKGGISGGGGSGGDDSFDGANIS) are disordered. Gly residues predominate over residues 172–181 (GISGGGGSGG). Coiled coils occupy residues 187 to 241 (GANI…KRIE) and 297 to 502 (SKIE…ASIS). The segment at 500 to 551 (SISPISSVPKSPITTKRSSIILNSPPMTSQQSSPKIQDLLSSSGSSSVSGIN) is pseudosubstrate/autoinhibitory domain. Positions 521-534 (LNSPPMTSQQSSPK) are enriched in polar residues. Positions 521–540 (LNSPPMTSQQSSPKIQDLLS) are disordered. The tract at residues 552–852 (ISSETGEMGI…KVGAKQLPKA (301 aa)) is catalytic. The 245-residue stretch at 564–808 (EFDPIINKWI…VCALLDLDVK (245 aa)) folds into the Alpha-type protein kinase domain. 778–783 (GLGNLG) provides a ligand contact to ATP. 7 WD repeats span residues 867–897 (SFRE…RVFD), 910–938 (GHRK…KVHI), 952–980 (GHTG…KVWD), 993–1021 (VHTK…YVWD), 1033–1061 (GHED…KIWD), 1073–1101 (GHWN…KVWD), and 1114–1142 (SHSL…KVWE).

The protein belongs to the protein kinase superfamily. Alpha-type protein kinase family. ALPK subfamily. As to quaternary structure, oligomer. Requires Mg(2+) as cofactor. The cofactor is Mn(2+). In terms of processing, the N-terminus is blocked.

The catalysed reaction is L-threonyl-[myosin heavy-chain] + ATP = O-phospho-L-threonyl-[myosin heavy-chain] + ADP + H(+). In terms of biological role, catalyzes its autophosphorylation, which is needed for enzymatic activity and phosphorylates myosin II heavy chain at a threonine in the C-terminal tail region. This phosphorylation is critical for regulating the assembly and disassembly of myosin II filament, affecting myosin localization during an array of cellular contractile events, including cytokinesis and capping of cell surface receptors as well as chemotactic cell locomotion. This is Myosin heavy chain kinase A (mhkA) from Dictyostelium discoideum (Social amoeba).